The sequence spans 93 residues: Protein Tat (93 aa).

Residues 1–24 (MEPVDPELEPWNHPGSQPKTACNN) are interaction with human CREBBP. The segment at 1-48 (MEPVDPELEPWNHPGSQPKTACNNCHCKVCCYHCVYCFTKKGLGISYG) is transactivation. Residues Cys22, Cys25, and Cys27 each contribute to the Zn(2+) site. The tract at residues 22 to 37 (CNNCHCKVCCYHCVYC) is cysteine-rich. N6-acetyllysine; by host PCAF is present on Lys28. Positions 30, 33, 34, and 37 each coordinate Zn(2+). The tract at residues 38-48 (FTKKGLGISYG) is core. Basic residues predominate over residues 48–58 (GRKKRSQRRRT). The segment at 48-93 (GRKKRSQRRRTPQSNKSHQDPLPKQPLSQRLGDQTGQKEQKKTLES) is disordered. Positions 49–57 (RKKRSQRRR) match the Nuclear localization signal, RNA-binding (TAR), and protein transduction motif. The interaction with the host capping enzyme RNGTT stretch occupies residues 49–86 (RKKRSQRRRTPQSNKSHQDPLPKQPLSQRLGDQTGQKE). Lys50 and Lys51 each carry N6-acetyllysine; by host EP300 and GCN5L2. Arg52 bears the Asymmetric dimethylarginine; by host PRMT6 mark. Lys71 participates in a covalent cross-link: Glycyl lysine isopeptide (Lys-Gly) (interchain with G-Cter in ubiquitin). Residues 73 to 82 (PLSQRLGDQT) are compositionally biased toward polar residues. Basic and acidic residues predominate over residues 83–93 (GQKEQKKTLES).

This sequence belongs to the lentiviruses Tat family. Interacts with host CCNT1. Associates with the P-TEFb complex composed at least of Tat, P-TEFb (CDK9 and CCNT1), TAR RNA, RNA Pol II. Recruits the HATs CREBBP, TAF1/TFIID, EP300, PCAF and GCN5L2. Interacts with host KAT5/Tip60; this interaction targets the latter to degradation. Interacts with the host deacetylase SIRT1. Interacts with host capping enzyme RNGTT; this interaction stimulates RNGTT. Binds to host KDR, and to the host integrins ITGAV/ITGB3 and ITGA5/ITGB1. Interacts with host KPNB1/importin beta-1 without previous binding to KPNA1/importin alpha-1. Interacts with EIF2AK2. Interacts with host nucleosome assembly protein NAP1L1; this interaction may be required for the transport of Tat within the nucleus, since the two proteins interact at the nuclear rim. Interacts with host C1QBP/SF2P32; this interaction involves lysine-acetylated Tat. Interacts with the host chemokine receptors CCR2, CCR3 and CXCR4. Interacts with host DPP4/CD26; this interaction may trigger an anti-proliferative effect. Interacts with host LDLR. Interacts with the host extracellular matrix metalloproteinase MMP1. Interacts with host PRMT6; this interaction mediates Tat's methylation. Interacts with, and is ubiquitinated by MDM2/Hdm2. Interacts with host PSMC3 and HTATIP2. Interacts with STAB1; this interaction may overcome SATB1-mediated repression of IL2 and IL2RA (interleukin) in T cells by binding to the same domain than HDAC1. Interacts (when acetylated) with human CDK13, thereby increasing HIV-1 mRNA splicing and promoting the production of the doubly spliced HIV-1 protein Nef. Interacts with host TBP; this interaction modulates the activity of transcriptional pre-initiation complex. Interacts with host RELA. Asymmetrical arginine methylation by host PRMT6 seems to diminish the transactivation capacity of Tat and affects the interaction with host CCNT1. Post-translationally, acetylation by EP300, CREBBP, GCN5L2/GCN5 and PCAF regulates the transactivation activity of Tat. EP300-mediated acetylation of Lys-50 promotes dissociation of Tat from the TAR RNA through the competitive binding to PCAF's bromodomain. In addition, the non-acetylated Tat's N-terminus can also interact with PCAF. PCAF-mediated acetylation of Lys-28 enhances Tat's binding to CCNT1. Lys-50 is deacetylated by SIRT1. In terms of processing, polyubiquitination by host MDM2 does not target Tat to degradation, but activates its transactivation function and fosters interaction with CCNT1 and TAR RNA. Phosphorylated by EIF2AK2 on serine and threonine residues adjacent to the basic region important for TAR RNA binding and function. Phosphorylation of Tat by EIF2AK2 is dependent on the prior activation of EIF2AK2 by dsRNA.

The protein resides in the host nucleus. It is found in the host nucleolus. It localises to the host cytoplasm. The protein localises to the secreted. Its function is as follows. Transcriptional activator that increases RNA Pol II processivity, thereby increasing the level of full-length viral transcripts. Recognizes a hairpin structure at the 5'-LTR of the nascent viral mRNAs referred to as the transactivation responsive RNA element (TAR) and recruits the cyclin T1-CDK9 complex (P-TEFb complex) that will in turn hyperphosphorylate the RNA polymerase II to allow efficient elongation. The CDK9 component of P-TEFb and other Tat-activated kinases hyperphosphorylate the C-terminus of RNA Pol II that becomes stabilized and much more processive. Other factors such as HTATSF1/Tat-SF1, SUPT5H/SPT5, and HTATIP2 are also important for Tat's function. Besides its effect on RNA Pol II processivity, Tat induces chromatin remodeling of proviral genes by recruiting the histone acetyltransferases (HATs) CREBBP, EP300 and PCAF to the chromatin. This also contributes to the increase in proviral transcription rate, especially when the provirus integrates in transcriptionally silent region of the host genome. To ensure maximal activation of the LTR, Tat mediates nuclear translocation of NF-kappa-B by interacting with host RELA. Through its interaction with host TBP, Tat may also modulate transcription initiation. Tat can reactivate a latently infected cell by penetrating in it and transactivating its LTR promoter. In the cytoplasm, Tat is thought to act as a translational activator of HIV-1 mRNAs. Extracellular circulating Tat can be endocytosed by surrounding uninfected cells via the binding to several surface receptors such as CD26, CXCR4, heparan sulfate proteoglycans (HSPG) or LDLR. Neurons are rarely infected, but they internalize Tat via their LDLR. Through its interaction with nuclear HATs, Tat is potentially able to control the acetylation-dependent cellular gene expression. Modulates the expression of many cellular genes involved in cell survival, proliferation or in coding for cytokines or cytokine receptors. Tat plays a role in T-cell and neurons apoptosis. Tat induced neurotoxicity and apoptosis probably contribute to neuroAIDS. Circulating Tat also acts as a chemokine-like and/or growth factor-like molecule that binds to specific receptors on the surface of the cells, affecting many cellular pathways. In the vascular system, Tat binds to ITGAV/ITGB3 and ITGA5/ITGB1 integrins dimers at the surface of endothelial cells and competes with bFGF for heparin-binding sites, leading to an excess of soluble bFGF. This chain is Protein Tat, found in Pan troglodytes (Chimpanzee).